We begin with the raw amino-acid sequence, 190 residues long: Peptidyl-tRNA hydrolase (190 aa).

Y17 provides a ligand contact to tRNA. The Proton acceptor role is filled by H22. TRNA contacts are provided by Y67 and N69.

The protein belongs to the PTH family. Monomer.

Its subcellular location is the cytoplasm. The enzyme catalyses an N-acyl-L-alpha-aminoacyl-tRNA + H2O = an N-acyl-L-amino acid + a tRNA + H(+). In terms of biological role, hydrolyzes ribosome-free peptidyl-tRNAs (with 1 or more amino acids incorporated), which drop off the ribosome during protein synthesis, or as a result of ribosome stalling. Functionally, catalyzes the release of premature peptidyl moieties from peptidyl-tRNA molecules trapped in stalled 50S ribosomal subunits, and thus maintains levels of free tRNAs and 50S ribosomes. This Moorella thermoacetica (strain ATCC 39073 / JCM 9320) protein is Peptidyl-tRNA hydrolase.